We begin with the raw amino-acid sequence, 160 residues long: uncharacterized protein (160 aa).

3 consecutive C2H2-type zinc fingers follow at residues Leu10 to His32, Gln41 to His64, and Phe75 to His98. Residue Tyr115 is modified to Phosphotyrosine. Ser116 bears the Phosphoserine mark.

The protein localises to the nucleus. Its function is as follows. May be involved in transcriptional regulation. This is an uncharacterized protein from Drosophila melanogaster (Fruit fly).